We begin with the raw amino-acid sequence, 143 residues long: MNAVVWWQSLLLVMLGGAFGSGLRFVIGSCLLQRFGAGFPWGTLAVNLIGSFVAGFLLIWLDKRGSAGWSWRMLLIVGLIGGLTTFSSLMMECLVFVRSDRSLMVGLYLCITLLFGLLFVFLGARLGAFVCDDQRVLEIDRTA.

The next 4 membrane-spanning stretches (helical) occupy residues Ala3–Leu23, Trp41–Leu61, Ile76–Phe96, and Leu103–Gly123. The Na(+) site is built by Gly81 and Thr84.

This sequence belongs to the fluoride channel Fluc/FEX (TC 1.A.43) family.

The protein localises to the cell inner membrane. It catalyses the reaction fluoride(in) = fluoride(out). Its activity is regulated as follows. Na(+) is not transported, but it plays an essential structural role and its presence is essential for fluoride channel function. Fluoride-specific ion channel. Important for reducing fluoride concentration in the cell, thus reducing its toxicity. This Xylella fastidiosa (strain 9a5c) protein is Fluoride-specific ion channel FluC.